Reading from the N-terminus, the 82-residue chain is uncharacterized protein (82 aa).

The next 2 membrane-spanning stretches (helical) occupy residues 22–39 and 46–65; these read WASDVVIQFITIVVMFIA and LKMGGIIFVCCIGSAVTWVI.

The protein resides in the cell membrane. This is an uncharacterized protein from Bacillus subtilis (strain 168).